The following is a 193-amino-acid chain: Ion-translocating oxidoreductase complex subunit A (193 aa).

6 helical membrane-spanning segments follow: residues 4 to 24 (FLLVLLSTALVNNVVLVKFLG), 39 to 59 (IGMGLATTFVITVASAACWLV), 71 to 91 (FLRILSMILVIAAIVQFIETV), 102 to 122 (ALGIYLPLITTNCAVLGLPLM), 134 to 154 (TLSGFGASVGFTLVLVIFAGM), and 171 to 191 (PIAFVSAGLLGLAFMGFAGLV).

It belongs to the NqrDE/RnfAE family. In terms of assembly, the complex is composed of six subunits: RnfA, RnfB, RnfC, RnfD, RnfE and RnfG.

It is found in the cellular chromatophore membrane. In terms of biological role, part of a membrane-bound complex that couples electron transfer with translocation of ions across the membrane. Required for nitrogen fixation. Involved in electron transfer to nitrogenase. The protein is Ion-translocating oxidoreductase complex subunit A of Rhodobacter capsulatus (Rhodopseudomonas capsulata).